The following is a 31-amino-acid chain: MPTITSYFGFLLAASTITPALLIGLNKIRLI.

A helical membrane pass occupies residues 4 to 26 (ITSYFGFLLAASTITPALLIGLN).

It belongs to the PetL family. In terms of assembly, the 4 large subunits of the cytochrome b6-f complex are cytochrome b6, subunit IV (17 kDa polypeptide, PetD), cytochrome f and the Rieske protein, while the 4 small subunits are PetG, PetL, PetM and PetN. The complex functions as a dimer.

The protein localises to the plastid. The protein resides in the chloroplast thylakoid membrane. In terms of biological role, component of the cytochrome b6-f complex, which mediates electron transfer between photosystem II (PSII) and photosystem I (PSI), cyclic electron flow around PSI, and state transitions. PetL is important for photoautotrophic growth as well as for electron transfer efficiency and stability of the cytochrome b6-f complex. This is Cytochrome b6-f complex subunit 6 from Calycanthus floridus var. glaucus (Eastern sweetshrub).